The following is a 311-amino-acid chain: T-cell immunomodulatory protein (311 aa).

Residues N52, N70, and N181 are each glycosylated (N-linked (GlcNAc...) asparagine). Residues 266-286 traverse the membrane as a helical segment; it reads VLLTAIALIGVCVFILAIIGI.

Belongs to the TIP family. As to quaternary structure, interacts with RUVBL1, RUVBL2 and alpha-tubulin.

The protein resides in the secreted. It is found in the cell membrane. Modulator of T-cell function. Has a protective effect in graft versus host disease model. In Macaca fascicularis (Crab-eating macaque), this protein is T-cell immunomodulatory protein.